A 248-amino-acid chain; its full sequence is 3-oxoacyl-[acyl-carrier-protein] reductase FabG (248 aa).

Residues 14-17 (GGSR), 65-66 (DV), and N92 contribute to the NADP(+) site. Residue S144 coordinates substrate. Catalysis depends on Y157, which acts as the Proton acceptor. NADP(+)-binding positions include 157 to 161 (YAAAK) and I190.

This sequence belongs to the short-chain dehydrogenases/reductases (SDR) family. In terms of assembly, homotetramer.

It carries out the reaction a (3R)-hydroxyacyl-[ACP] + NADP(+) = a 3-oxoacyl-[ACP] + NADPH + H(+). It functions in the pathway lipid metabolism; fatty acid biosynthesis. Functionally, catalyzes the NADPH-dependent reduction of beta-ketoacyl-ACP substrates to beta-hydroxyacyl-ACP products, the first reductive step in the elongation cycle of fatty acid biosynthesis. The protein is 3-oxoacyl-[acyl-carrier-protein] reductase FabG (fabG) of Chlamydia muridarum (strain MoPn / Nigg).